The chain runs to 329 residues: MAKAPMRVAVTGAAGQIGYSLLFRIANGDLLGKDQPVILQLLEIADEKAQKALKGVIMEIDDCAFPLLAGVTAHSDPMTAFKDADVALLVGARPRGPGMERKDLLEANAQIFTVQGKALDAVASRNVKVLVVGNPANTNAYIAMKSAPNLPAKNFTAMLRLDHNRALSQIAAKISKPVTSIEKLTVWGNHSPTMYPDYRFATADGKSVKEAINDEVWNKDVFLPTVGKRGAAIIDARGVSSAASAANAAIDHVRDWVLGTNGKWVTMGIPSDGSYGIPKDTIFGFPVTVENGEYKIVQGLEIDAFSQERINLTLKELLEEREGVKHLLG.

12–18 contributes to the NAD(+) binding site; the sequence is GAAGQIG. Residues arginine 95 and arginine 101 each contribute to the substrate site. NAD(+) is bound by residues asparagine 108, glutamine 115, and 132-134; that span reads VGN. Substrate is bound by residues asparagine 134 and arginine 165. The active-site Proton acceptor is histidine 190.

The protein belongs to the LDH/MDH superfamily. MDH type 2 family.

The enzyme catalyses (S)-malate + NAD(+) = oxaloacetate + NADH + H(+). Its function is as follows. Catalyzes the reversible oxidation of malate to oxaloacetate. This is Malate dehydrogenase from Janthinobacterium sp. (strain Marseille) (Minibacterium massiliensis).